Reading from the N-terminus, the 2327-residue chain is Nonribosomal peptide synthetase apmB (2327 aa).

The adenylation 1 stretch occupies residues 214-605 (DTQAKSRPDS…GRKDMQIKLR (392 aa)). Positions 734 to 810 (EPATATGKVL…EMADACTKVI (77 aa)) constitute a Carrier 1 domain. Position 771 is an O-(pantetheine 4'-phosphoryl)serine (Ser-771). The segment at 845-1259 (EDLYPCTAMQ…IFISSKDQES (415 aa)) is condensation 1. The interval 1281–1675 (ERIAERPDHE…RRKDTQVKLR (395 aa)) is adenylation 2. The 77-residue stretch at 1816-1892 (PPTTDMQITM…AISAVAETLS (77 aa)) folds into the Carrier 2 domain. Ser-1853 carries the O-(pantetheine 4'-phosphoryl)serine modification. The interval 1937–2260 (TDFQSLAING…VFQYQDFGGE (324 aa)) is condensation 2. The disordered stretch occupies residues 2299 to 2327 (RVDLPRRPSPAGDTRDGPTAASDSPSRAR).

The protein belongs to the NRP synthetase family.

The catalysed reaction is N-benzoyl-L-phenylalaninol + benzoate + L-phenylalanine + 2 ATP = asperphenamate + 2 AMP + 2 diphosphate + H(+). It participates in secondary metabolite biosynthesis. Functionally, nonribosomal peptide synthetase; part of the gene cluster that mediates the biosynthesis of asperphenamate, a rare linear amino acid ester that exhibits antitumor activity towards a number of cell lines. The structure of asperphenamate contains two subunits, N-benzoylphenylalanine and N-benzoylphenylalaninol, which are connected by an inter-molecular ester bond. The first step of asperphenamate biosynthesis is the generation of N-benzoylphenylalaninol by the nonribosomal peptide synthase apmA. Using phenylalanine and benzoic acid as substrates, apmA catalyzes amide bond formation and tethers the intermediate into the NRPS chain. Then, the terminal R domain of apmA catalyzes the reduction reaction to get the shunt product N-benzoylphenylalaninol. Subsequently, the nonribosomal peptide synthase apmB activates the same substrates as does apmA (phenylalanine and benzoic acid) to produce N-benzoylphenylalanine before condensing N-benzoylphenylalanine and N-benzoylphenylalaninol to release asperphenamate. This chain is Nonribosomal peptide synthetase apmB, found in Penicillium brevicompactum.